A 356-amino-acid chain; its full sequence is tRNA N6-adenosine threonylcarbamoyltransferase (356 aa).

Positions 115 and 119 each coordinate Fe cation. Residues 138–142 (LVSGG), Asp171, Gly184, and Asn283 each bind substrate. Asp311 provides a ligand contact to Fe cation.

Belongs to the KAE1 / TsaD family. The cofactor is Fe(2+).

It is found in the cytoplasm. It catalyses the reaction L-threonylcarbamoyladenylate + adenosine(37) in tRNA = N(6)-L-threonylcarbamoyladenosine(37) in tRNA + AMP + H(+). Required for the formation of a threonylcarbamoyl group on adenosine at position 37 (t(6)A37) in tRNAs that read codons beginning with adenine. Is involved in the transfer of the threonylcarbamoyl moiety of threonylcarbamoyl-AMP (TC-AMP) to the N6 group of A37, together with TsaE and TsaB. TsaD likely plays a direct catalytic role in this reaction. The chain is tRNA N6-adenosine threonylcarbamoyltransferase from Synechococcus sp. (strain WH7803).